The chain runs to 407 residues: Ran GTPase-activating protein 1 (407 aa).

LRR repeat units lie at residues 11–39 (EEEQ…EELA), 40–67 (ALKT…KCIA), 68–101 (ENTQ…KFLL), 102–133 (PVLL…DYIA), 134–166 (HAVN…LAQN), 167–197 (KKAA…ALGL), 198–226 (KSHS…IHYG), 227–256 (LQYL…KALP), 257–285 (TWKD…KVFT), 286–315 (EVKF…LPAM), and 316–346 (EKGN…LQSK). The segment at 353-378 (DDFEEVDSEDEEGEDEEDEDEDEKLE) is disordered. S360 is subject to Phosphoserine.

This sequence belongs to the RNA1 family.

Its subcellular location is the cytoplasm. Functionally, GTPase activator for the nuclear Ras-related regulatory protein GSP1 (Ran), converting it to the putatively inactive GDP-bound state. In Saccharomyces cerevisiae (strain ATCC 204508 / S288c) (Baker's yeast), this protein is Ran GTPase-activating protein 1 (RNA1).